A 339-amino-acid polypeptide reads, in one-letter code: Methyltransferase ptaI (339 aa).

This sequence belongs to the methyltransferase superfamily.

It participates in secondary metabolite biosynthesis. Functionally, methyltransferase; part of the gene cluster that mediates the biosynthesis of pestheic acid, a diphenyl ether which is a biosynthetic precursor of the unique chloropupukeananes. The biosynthesis initiates from condensation of acetate and malonate units catalyzed by the non-reducing PKS ptaA. As the ptaA protein is TE/CLC domain-deficient, hydrolysis and Claisen cyclization of the polyketide could be catalyzed by ptaB containing a beta-lactamase domain. The ptaB protein might hydrolyze the thioester bond between the ACP of ptaA and the intermediate to release atrochrysone carboxylic acid, which is spontaneously dehydrated to form endocrocin anthrone. Endocrocin anthrone is then converted to endocrocin, catalyzed by the anthrone oxygenase ptaC. Spontaneous decarboxylation of endocrocin occurs to generate emodin. An O-methyltransferase (ptaH or ptaI) could methylate emodin to form physcion. PtaJ could then catalyze the oxidative cleavage of physcion, and rotation of the intermediate could then afford desmethylisosulochrin. PtaF, a putative NADH-dependent oxidoreductase, might also participate in the oxidative cleavage step. Desmethylisosulochrin is then transformed by another O-methyltransferase (ptaH or ptaI) to form isosulochrin. Chlorination of isosulochrin by ptaM in the cyclohexadienone B ring then produces chloroisosulochrin. PtaE is responsible for the oxidative coupling reactions of both benzophenones isosulouchrin and chloroisosulochrin to RES-1214-1 and pestheic acid respectively, regardless of chlorination. The protein is Methyltransferase ptaI of Pestalotiopsis fici (strain W106-1 / CGMCC3.15140).